Consider the following 322-residue polypeptide: Putative small RNA degrading nuclease 4 (322 aa).

The region spanning 75 to 213 (MLALDCEMVL…HDAAAAMKLA (139 aa)) is the Exonuclease domain.

It belongs to the REXO1/REXO3 family.

It localises to the nucleus. Functionally, putative 3'-5' exonuclease degrading single-stranded small RNAs. This Arabidopsis thaliana (Mouse-ear cress) protein is Putative small RNA degrading nuclease 4 (SDN4).